Consider the following 310-residue polypeptide: Glycerol-3-phosphate dehydrogenase [NAD(P)+] (310 aa).

The NADPH site is built by tryptophan 19, arginine 39, arginine 40, and lysine 87. Residues lysine 87 and glycine 115 each contribute to the sn-glycerol 3-phosphate site. Serine 119 is an NADPH binding site. Sn-glycerol 3-phosphate contacts are provided by lysine 170, aspartate 223, serine 233, arginine 234, and asparagine 235. Lysine 170 functions as the Proton acceptor in the catalytic mechanism. Arginine 234 is a binding site for NADPH. Glutamate 260 is an NADPH binding site.

This sequence belongs to the NAD-dependent glycerol-3-phosphate dehydrogenase family.

It is found in the cytoplasm. It carries out the reaction sn-glycerol 3-phosphate + NAD(+) = dihydroxyacetone phosphate + NADH + H(+). The enzyme catalyses sn-glycerol 3-phosphate + NADP(+) = dihydroxyacetone phosphate + NADPH + H(+). It functions in the pathway membrane lipid metabolism; glycerophospholipid metabolism. Catalyzes the reduction of the glycolytic intermediate dihydroxyacetone phosphate (DHAP) to sn-glycerol 3-phosphate (G3P), the key precursor for phospholipid synthesis. The polypeptide is Glycerol-3-phosphate dehydrogenase [NAD(P)+] (Synechococcus sp. (strain JA-3-3Ab) (Cyanobacteria bacterium Yellowstone A-Prime)).